The following is a 414-amino-acid chain: DNA polymerase IV (414 aa).

One can recognise a UmuC domain in the interval 8 to 189 (IFHIDMNSFY…LPIEEMHGIG (182 aa)). Residues D12 and D108 each coordinate Mg(2+). E109 is an active-site residue. The disordered stretch occupies residues 394-414 (EESKTRGTSFNRDFFQDEKKR).

The protein belongs to the DNA polymerase type-Y family. As to quaternary structure, monomer. The cofactor is Mg(2+).

It localises to the cytoplasm. It catalyses the reaction DNA(n) + a 2'-deoxyribonucleoside 5'-triphosphate = DNA(n+1) + diphosphate. In terms of biological role, poorly processive, error-prone DNA polymerase involved in untargeted mutagenesis. Copies undamaged DNA at stalled replication forks, which arise in vivo from mismatched or misaligned primer ends. These misaligned primers can be extended by PolIV. Exhibits no 3'-5' exonuclease (proofreading) activity. May be involved in translesional synthesis, in conjunction with the beta clamp from PolIII. This Bacillus velezensis (strain DSM 23117 / BGSC 10A6 / LMG 26770 / FZB42) (Bacillus amyloliquefaciens subsp. plantarum) protein is DNA polymerase IV.